We begin with the raw amino-acid sequence, 245 residues long: Ribonuclease 3 (245 aa).

The 129-residue stretch at 18–146 (LSKFLENLSI…FVGAIYLDSG (129 aa)) folds into the RNase III domain. Position 59 (Glu59) interacts with Mg(2+). Asp63 is an active-site residue. 2 residues coordinate Mg(2+): Asp132 and Glu135. Glu135 is a catalytic residue. The region spanning 173-242 (DYKSLLQEYV…AEVALKAMEN (70 aa)) is the DRBM domain.

Belongs to the ribonuclease III family. In terms of assembly, homodimer. The cofactor is Mg(2+).

It localises to the cytoplasm. The enzyme catalyses Endonucleolytic cleavage to 5'-phosphomonoester.. Functionally, digests double-stranded RNA. Involved in the processing of primary rRNA transcript to yield the immediate precursors to the large and small rRNAs (23S and 16S). Processes some mRNAs, and tRNAs when they are encoded in the rRNA operon. Processes pre-crRNA and tracrRNA of type II CRISPR loci if present in the organism. This chain is Ribonuclease 3, found in Borreliella burgdorferi (strain ATCC 35210 / DSM 4680 / CIP 102532 / B31) (Borrelia burgdorferi).